The chain runs to 1250 residues: DNA-directed RNA polymerase subunit beta (1250 aa).

The segment at 1139–1226 is disordered; sequence GGAELAKPAP…DLFDEGDEDL (88 aa). Composition is skewed to acidic residues over residues 1155–1183 and 1207–1226; these read ESGE…DPEE and ADDD…DEDL.

This sequence belongs to the RNA polymerase beta chain family. In terms of assembly, the RNAP catalytic core consists of 2 alpha, 1 beta, 1 beta' and 1 omega subunit. When a sigma factor is associated with the core the holoenzyme is formed, which can initiate transcription.

The enzyme catalyses RNA(n) + a ribonucleoside 5'-triphosphate = RNA(n+1) + diphosphate. Its function is as follows. DNA-dependent RNA polymerase catalyzes the transcription of DNA into RNA using the four ribonucleoside triphosphates as substrates. The protein is DNA-directed RNA polymerase subunit beta of Symbiobacterium thermophilum (strain DSM 24528 / JCM 14929 / IAM 14863 / T).